The chain runs to 510 residues: MANIDIAGIMKDLPNDGRIPKTKIVCTLGPSSRTVPMLEKLLRAGMNVARFNFSHGTHEYHQETLDNLKIAMQNTQILCAVMLDTKGPEIRTGFLTDGKPIQLKEGQEITVSTDYTIKGNEEMISMSYKKLVMDLKPGNTILCADGTITLTVLSCDPPSGTVRCRCENTATLGERKNVNLPGVVVDLPTLTEKDKEDILEWGVPNNIDMIALSFVRKGSDLVNVRKVLGPHAKRIQLMSKVENQEGVINFDEILRETDSFMVARGDLGMEIPVEKIFLAQKMMIYKCNLAGKAVVTATQMLESMIKSPAPTRAEATDVANAVLDGTDCVMLSGESAAGAYPELAVKIMSRICIEAESSLDNEAIFKEMIRCTPLPMSPLESLASSAVRTANKARAKLIVVLTRGGSTAKLVAKYRPAVPILSVVVPVLTTDSFDWSISDETPARHSLVYRGLIPLLGEGSAKATDSESTEVILEAALKSAVTRGLCKPGDAVVALHRIGSASVIKICVVK.

Position 50 (R50) interacts with substrate. 4 residues coordinate K(+): N52, S54, D84, and T85. 52 to 55 (NFSH) contributes to the ATP binding site. The ATP site is built by R91 and K176. Residue E242 participates in Mg(2+) binding. 3 residues coordinate substrate: G265, D266, and T298. D266 contributes to the Mg(2+) binding site.

It belongs to the pyruvate kinase family. As to quaternary structure, homotetramer. The cofactor is Mg(2+). K(+) is required as a cofactor.

The protein localises to the cytoplasm. The enzyme catalyses pyruvate + ATP = phosphoenolpyruvate + ADP + H(+). It participates in carbohydrate degradation; glycolysis; pyruvate from D-glyceraldehyde 3-phosphate: step 5/5. In Solanum tuberosum (Potato), this protein is Pyruvate kinase, cytosolic isozyme.